The following is a 381-amino-acid chain: 4-hydroxyphenylpyruvate dioxygenase (381 aa).

VOC domains are found at residues 22-156 (GMDA…LVDR) and 184-338 (AIDH…IFTK). Positions 187, 270, and 349 each coordinate Fe cation.

It belongs to the 4HPPD family. Homodimer. Fe cation is required as a cofactor.

The catalysed reaction is 3-(4-hydroxyphenyl)pyruvate + O2 = homogentisate + CO2. It participates in amino-acid degradation; L-phenylalanine degradation; acetoacetate and fumarate from L-phenylalanine: step 3/6. The polypeptide is 4-hydroxyphenylpyruvate dioxygenase (hpd) (Streptomyces avermitilis (strain ATCC 31267 / DSM 46492 / JCM 5070 / NBRC 14893 / NCIMB 12804 / NRRL 8165 / MA-4680)).